The sequence spans 476 residues: Stromelysin-2 (476 aa).

Positions 1–17 (MEPLAILVLLCFPICSA) are cleaved as a signal peptide. Residues 18–99 (YPLHGAVRQD…PRCGVPDVGG (82 aa)) constitute a propeptide, activation peptide. The Cysteine switch signature appears at 90–97 (PRCGVPDV). Zn(2+) is bound by residues Cys92, His168, Asp170, His183, His196, and His218. The active site involves Glu219. His222 and His228 together coordinate Zn(2+). 4 Hemopexin repeats span residues 286–335 (PVKC…WPSL), 336–382 (PSGL…GFPP), 384–432 (VKKI…FPGI), and 433–476 (EPQV…WLLC). Cys289 and Cys476 are oxidised to a cystine.

It belongs to the peptidase M10A family. Zn(2+) is required as a cofactor. Requires Ca(2+) as cofactor.

The protein localises to the secreted. The protein resides in the extracellular space. Its subcellular location is the extracellular matrix. The enzyme catalyses Similar to stromelysin 1, but action on collagen types III, IV and V is weak.. Can degrade fibronectin, gelatins of type I, III, IV, and V; weakly collagens III, IV, and V. Activates procollagenase. The polypeptide is Stromelysin-2 (Mmp10) (Rattus norvegicus (Rat)).